Reading from the N-terminus, the 358-residue chain is Aromatic amino acid aminotransferase (358 aa).

Lys214 is modified (N6-(pyridoxal phosphate)lysine).

It belongs to the class-II pyridoxal-phosphate-dependent aminotransferase family. In terms of assembly, homodimer. Pyridoxal 5'-phosphate serves as cofactor.

The catalysed reaction is an aromatic L-alpha-amino acid + 2-oxoglutarate = an aromatic oxo-acid + L-glutamate. Aminotransferase that catalyzes the conversion of aromatic amino acids and 2-oxoglutarate into corresponding aromatic oxo acids and L-glutamate. This chain is Aromatic amino acid aminotransferase, found in Rhodococcus erythropolis (strain PR4 / NBRC 100887).